Consider the following 52-residue polypeptide: MRSAILLVIVAIVAILGFLGVNAEPLPSPLAEPNPHAKAAPLSPAVMASLAG.

Positions 1–23 are cleaved as a signal peptide; that stretch reads MRSAILLVIVAIVAILGFLGVNA. 3 AXPX repeats span residues 23-26, 31-34, and 39-42; these read AEPL, AEPN, and AAPL. Residues 24 to 41 constitute a propeptide that is removed on maturation; sequence EPLPSPLAEPNPHAKAAP. Alanine 51 is subject to Alanine amide.

Expressed by the venom gland.

The protein localises to the secreted. In Eumenes pomiformis (Potter wasp), this protein is Venom peptide 4a.